We begin with the raw amino-acid sequence, 445 residues long: Histone acetyltransferase of the MYST family 2 (445 aa).

Positions 1-23 are enriched in polar residues; it reads MGSSANTETNGNAPPPSSNQKPP. The segment at 1–58 is disordered; it reads MGSSANTETNGNAPPPSSNQKPPATNGVDGSHPPPPPLTPDQAIIESDPSKKRKMGML. Residues 60 to 118 form the Tudor-knot domain; it reads LEVGTRVMCRWRDGKHHPVKVIERRRIHNGGQNDYEYYVHYTEFNRRLDEWTQLDQLDL. Positions 169-440 constitute an MYST-type HAT domain; the sequence is TKVKNISTIE…VDASKLIWTP (272 aa). The C2HC MYST-type zinc finger occupies 202 to 227; the sequence is LFFCEFCLNFMKRKEQLQRHMRKCDL. Position 269 is an N6-acetyllysine; by autocatalysis (K269). Residues 312 to 314 and 319 to 325 contribute to the acetyl-CoA site; these read ILT and QRKGYGK. The Proton donor/acceptor role is filled by E345. S349 is a binding site for acetyl-CoA.

This sequence belongs to the MYST (SAS/MOZ) family. In terms of assembly, interacts with MRG1 and MRG2. In terms of processing, autoacetylation at Lys-269 is required for proper function. As to expression, expressed in cotyledons, leaves, stems, roots and, at higher levels in developing flowers, particularly in the anthers and gynoecia. Constitutively expressed in all tissues, predominantly in shoot apical meristem.

The protein resides in the nucleus. The enzyme catalyses L-lysyl-[protein] + acetyl-CoA = N(6)-acetyl-L-lysyl-[protein] + CoA + H(+). Its function is as follows. Histone acetyltransferase which may be involved in transcriptional activation. Acetylates 'Lys-5' of histone H4 (H4K5ac). Essential for gametophyte development. Negative regulator of flowering controlling the H4K5ac levels in the FLC chromatin. The chain is Histone acetyltransferase of the MYST family 2 from Arabidopsis thaliana (Mouse-ear cress).